The primary structure comprises 197 residues: FMN-dependent NADH:quinone oxidoreductase (197 aa).

Residues Ser10, 16-18 (SQS), 93-96 (MYNF), and 137-140 (TRGG) each bind FMN.

The protein belongs to the azoreductase type 1 family. In terms of assembly, homodimer. FMN is required as a cofactor.

The catalysed reaction is 2 a quinone + NADH + H(+) = 2 a 1,4-benzosemiquinone + NAD(+). The enzyme catalyses N,N-dimethyl-1,4-phenylenediamine + anthranilate + 2 NAD(+) = 2-(4-dimethylaminophenyl)diazenylbenzoate + 2 NADH + 2 H(+). In terms of biological role, quinone reductase that provides resistance to thiol-specific stress caused by electrophilic quinones. Its function is as follows. Also exhibits azoreductase activity. Catalyzes the reductive cleavage of the azo bond in aromatic azo compounds to the corresponding amines. The chain is FMN-dependent NADH:quinone oxidoreductase from Shewanella denitrificans (strain OS217 / ATCC BAA-1090 / DSM 15013).